A 155-amino-acid polypeptide reads, in one-letter code: Large ribosomal subunit protein uL22 (155 aa).

Residues 109–155 (HITVIVESRPPKKAGKQGASASAARARRAQASKAATKKATDSKEGSE) form a disordered region. A compositionally biased stretch (basic and acidic residues) spans 146–155 (KATDSKEGSE).

It belongs to the universal ribosomal protein uL22 family. In terms of assembly, part of the 50S ribosomal subunit.

Its function is as follows. This protein binds specifically to 23S rRNA; its binding is stimulated by other ribosomal proteins, e.g. L4, L17, and L20. It is important during the early stages of 50S assembly. It makes multiple contacts with different domains of the 23S rRNA in the assembled 50S subunit and ribosome. In terms of biological role, the globular domain of the protein is located near the polypeptide exit tunnel on the outside of the subunit, while an extended beta-hairpin is found that lines the wall of the exit tunnel in the center of the 70S ribosome. The protein is Large ribosomal subunit protein uL22 of Mycolicibacterium vanbaalenii (strain DSM 7251 / JCM 13017 / BCRC 16820 / KCTC 9966 / NRRL B-24157 / PYR-1) (Mycobacterium vanbaalenii).